Consider the following 182-residue polypeptide: MNSHENRVAAPLLSFRLSLVLFAVLSVLPLGGCARWDNPVLSVKETSAAQLLGANQINAATRQRILRAVGEDAQERALRDDLKQHPGNVDAAIRLTKALVAQKRPHEALQVLDNVLVVTPDNLRALNAKAVILDIEGRHDAAQELYRQALETNPENQMLHHNLHLSLAFEGKSEQRTLPQSR.

A helical membrane pass occupies residues 17–34; the sequence is LSLVLFAVLSVLPLGGCA. TPR repeat units lie at residues 89-122 and 123-156; these read VDAAIRLTKALVAQKRPHEALQVLDNVLVVTPDN and LRALNAKAVILDIEGRHDAAQELYRQALETNPEN.

The protein resides in the membrane. This is an uncharacterized protein from Sinorhizobium fredii (strain NBRC 101917 / NGR234).